A 217-amino-acid chain; its full sequence is Histone H1-gamma, late (217 aa).

Disordered regions lie at residues 1 to 21 (MSAA…HPPS) and 80 to 217 (GKGA…PAKK). An H15 domain is found at 17-91 (AHPPSSQMVV…GASGSFKLGK (75 aa)). Residues 104 to 113 (IAAKKAKLAA) are compositionally biased toward basic residues. The span at 114–123 (KKKEQREKKA) shows a compositional bias: basic and acidic residues. A compositionally biased stretch (basic residues) spans 124–217 (LKTKARKEKV…AKKAAKPAKK (94 aa)).

The protein belongs to the histone H1/H5 family.

The protein resides in the nucleus. It is found in the chromosome. Its function is as follows. Histones H1 are necessary for the condensation of nucleosome chains into higher-order structures. The polypeptide is Histone H1-gamma, late (Strongylocentrotus purpuratus (Purple sea urchin)).